The following is a 432-amino-acid chain: Adenylosuccinate synthetase (432 aa).

Residues 13 to 19 (GDEGKGK) and 41 to 43 (GHT) each bind GTP. Residue D14 is the Proton acceptor of the active site. Residues D14 and G41 each contribute to the Mg(2+) site. IMP is bound by residues 14 to 17 (DEGK), 39 to 42 (NAGH), T130, R144, Q225, T240, and R304. H42 functions as the Proton donor in the catalytic mechanism. 300–306 (ATTGRKR) contributes to the substrate binding site. Residues R306, 332–334 (KLD), and 415–417 (STG) each bind GTP.

This sequence belongs to the adenylosuccinate synthetase family. As to quaternary structure, homodimer. Mg(2+) serves as cofactor.

It is found in the cytoplasm. The catalysed reaction is IMP + L-aspartate + GTP = N(6)-(1,2-dicarboxyethyl)-AMP + GDP + phosphate + 2 H(+). Its pathway is purine metabolism; AMP biosynthesis via de novo pathway; AMP from IMP: step 1/2. Functionally, plays an important role in the de novo pathway of purine nucleotide biosynthesis. Catalyzes the first committed step in the biosynthesis of AMP from IMP. This chain is Adenylosuccinate synthetase, found in Alteromonas mediterranea (strain DSM 17117 / CIP 110805 / LMG 28347 / Deep ecotype).